The sequence spans 347 residues: Melanoma-associated antigen B1 (347 aa).

The segment covering 1–17 has biased composition (basic residues); that stretch reads MPRGQKSKLRAREKRRK. The interval 1 to 104 is disordered; the sequence is MPRGQKSKLR…QATTSTESSV (104 aa). Composition is skewed to polar residues over residues 39–53 and 89–102; these read PSSSPVLGDTPTSSP and ENASFSQATTSTES. Residues 108 to 307 form the MAGE domain; it reads VAWEAGMLMH…RDFPSHYEEA (200 aa). Residues 315 to 347 form a disordered region; the sequence is AQVRSSVRARRRTTATTFRARSRAPFSRSSHPM. Residues 328–347 show a composition bias toward low complexity; the sequence is TATTFRARSRAPFSRSSHPM.

As to expression, expressed only in testis.

This chain is Melanoma-associated antigen B1 (MAGEB1), found in Homo sapiens (Human).